Here is a 66-residue protein sequence, read N- to C-terminus: Large ribosomal subunit protein uL29 (66 aa).

This sequence belongs to the universal ribosomal protein uL29 family.

This Rhizobium etli (strain CIAT 652) protein is Large ribosomal subunit protein uL29.